The sequence spans 453 residues: Methionine aminopeptidase 2-1 (453 aa).

A compositionally biased stretch (basic and acidic residues) spans 1 to 12 (MGSKTPDGHRQS). The segment at 1–101 (MGSKTPDGHR…TTPPRVPLST (101 aa)) is disordered. Over residues 46–57 (GEDDDDDDENEE) the composition is skewed to acidic residues. Basic residues predominate over residues 67-82 (KKKKRKKSKKKNKKSK). A substrate-binding site is contributed by His210. Residues Asp231, Asp242, and His306 each coordinate a divalent metal cation. His314 lines the substrate pocket. A divalent metal cation-binding residues include Glu339 and Glu434.

The protein belongs to the peptidase M24A family. Methionine aminopeptidase eukaryotic type 2 subfamily. It depends on Co(2+) as a cofactor. Zn(2+) serves as cofactor. Requires Mn(2+) as cofactor. The cofactor is Fe(2+).

Its subcellular location is the cytoplasm. The enzyme catalyses Release of N-terminal amino acids, preferentially methionine, from peptides and arylamides.. In terms of biological role, cotranslationally removes the N-terminal methionine from nascent proteins. The N-terminal methionine is often cleaved when the second residue in the primary sequence is small and uncharged (Met-Ala-, Cys, Gly, Pro, Ser, Thr, or Val). In Aspergillus terreus (strain NIH 2624 / FGSC A1156), this protein is Methionine aminopeptidase 2-1.